The primary structure comprises 346 residues: Lipooligosaccharide heptosyltransferase 2 (346 aa).

It belongs to the glycosyltransferase 9 family.

The enzyme catalyses an L-alpha-D-Hep-(1-&gt;5)-[alpha-Kdo-(2-&gt;4)]-alpha-Kdo-(2-&gt;6)-lipid A + ADP-L-glycero-beta-D-manno-heptose = an L-alpha-D-Hep-(1-&gt;3)-L-alpha-D-Hep-(1-&gt;5)-[alpha-Kdo-(2-&gt;4)]-alpha-Kdo-(2-&gt;6)-lipid A + ADP + H(+). It participates in bacterial outer membrane biogenesis; LOS core biosynthesis. Functionally, glycosyltransferase involved in the biosynthesis of the core oligosaccharide region of lipooligosaccharide (LOS). Catalyzes the addition of a heptose unit to the heptosyl-Kdo2-lipid A module. The polypeptide is Lipooligosaccharide heptosyltransferase 2 (waaF) (Haemophilus influenzae (strain ATCC 51907 / DSM 11121 / KW20 / Rd)).